The primary structure comprises 511 residues: uncharacterized protein (511 aa).

The next 3 membrane-spanning stretches (helical) occupy residues 33-53 (IICM…LAMA), 59-79 (IPVQ…AHIS), and 97-117 (VGRF…TTSI). Phosphoserine occurs at positions 147, 161, and 162. The segment at 157–180 (REGNSSDEYLPPQSSRRDVSSEKP) is disordered. 7 helical membrane passes run 216–236 (LWLY…AGIF), 249–269 (IKGA…LGAF), 297–317 (MVES…EHLG), 332–352 (SLAF…SKVV), 412–432 (VLWG…YIML), 449–469 (IITS…SYDV), and 483–503 (IMNI…MFLI).

To yeast YCR061W.

The protein localises to the endoplasmic reticulum membrane. This is an uncharacterized protein from Schizosaccharomyces pombe (strain 972 / ATCC 24843) (Fission yeast).